The following is a 228-amino-acid chain: 7-cyano-7-deazaguanine synthase (228 aa).

8–18 (LSGGLDSTTCL) provides a ligand contact to ATP. Positions 188, 198, 201, and 204 each coordinate Zn(2+).

It belongs to the QueC family. Zn(2+) serves as cofactor.

The catalysed reaction is 7-carboxy-7-deazaguanine + NH4(+) + ATP = 7-cyano-7-deazaguanine + ADP + phosphate + H2O + H(+). Its pathway is purine metabolism; 7-cyano-7-deazaguanine biosynthesis. Catalyzes the ATP-dependent conversion of 7-carboxy-7-deazaguanine (CDG) to 7-cyano-7-deazaguanine (preQ(0)). This chain is 7-cyano-7-deazaguanine synthase, found in Legionella pneumophila (strain Corby).